Reading from the N-terminus, the 414-residue chain is Succinylornithine transaminase (414 aa).

Residue Lys260 is modified to N6-(pyridoxal phosphate)lysine.

It belongs to the class-III pyridoxal-phosphate-dependent aminotransferase family. AstC subfamily. It depends on pyridoxal 5'-phosphate as a cofactor.

The enzyme catalyses N(2)-succinyl-L-ornithine + 2-oxoglutarate = N-succinyl-L-glutamate 5-semialdehyde + L-glutamate. It functions in the pathway amino-acid degradation; L-arginine degradation via AST pathway; L-glutamate and succinate from L-arginine: step 3/5. Functionally, catalyzes the transamination of N(2)-succinylornithine and alpha-ketoglutarate into N(2)-succinylglutamate semialdehyde and glutamate. Can also act as an acetylornithine aminotransferase. This Yersinia pseudotuberculosis serotype O:1b (strain IP 31758) protein is Succinylornithine transaminase.